Here is a 464-residue protein sequence, read N- to C-terminus: Probable multidrug resistance protein NorM (464 aa).

A run of 12 helical transmembrane segments spans residues 22–42 (LIKL…FGMA), 64–84 (VFWV…VTIA), 104–124 (FLAI…DVLI), 142–162 (LKVI…SAML), 172–192 (MIVT…MIFG), 204–224 (AAVA…YVIF), 258–278 (FVFS…GAEA), 288–308 (VESL…TLVG), 326–346 (GWIL…LFPE), 358–378 (IIEI…FLAI), 384–404 (GALR…ISIW), and 410–430 (VAFV…IGMI).

Belongs to the multi antimicrobial extrusion (MATE) (TC 2.A.66.1) family.

It localises to the cell membrane. Its function is as follows. Multidrug efflux pump. This chain is Probable multidrug resistance protein NorM (norM), found in Thermotoga maritima (strain ATCC 43589 / DSM 3109 / JCM 10099 / NBRC 100826 / MSB8).